Reading from the N-terminus, the 249-residue chain is MQWSDQAIILGIRRHGESSVIAEVMTPGHGRHLGLVRSGRSRAMQPVLQPGNSVEVVWRARLDEHLGEFRVEPLQLRAARLIETATSVYGIQALGSLLRLLPERDPHPHLYEALAVIVDHLQDPADAGELFVRFELAVLNDLGFGLDLSRCGATGARSELVYVSPKSGRAICREAGAPYAERMLALPDFLSGQNRAADHESLAAAFRLTAYFLNRHVYEPRGVDAASARDGFVHATLKALRTASSEAPQ.

The protein belongs to the RecO family.

Its function is as follows. Involved in DNA repair and RecF pathway recombination. The chain is DNA repair protein RecO from Sinorhizobium medicae (strain WSM419) (Ensifer medicae).